Consider the following 87-residue polypeptide: UPF0250 protein BUAPTUC7_482 (87 aa).

Belongs to the UPF0250 family.

The polypeptide is UPF0250 protein BUAPTUC7_482 (Buchnera aphidicola subsp. Acyrthosiphon pisum (strain Tuc7)).